The chain runs to 146 residues: Large ribosomal subunit protein bL9 (146 aa).

This sequence belongs to the bacterial ribosomal protein bL9 family.

Binds to the 23S rRNA. The polypeptide is Large ribosomal subunit protein bL9 (Deinococcus geothermalis (strain DSM 11300 / CIP 105573 / AG-3a)).